A 358-amino-acid polypeptide reads, in one-letter code: Aromatic amino acid aminotransferase (358 aa).

K214 bears the N6-(pyridoxal phosphate)lysine mark.

It belongs to the class-II pyridoxal-phosphate-dependent aminotransferase family. As to quaternary structure, homodimer. Requires pyridoxal 5'-phosphate as cofactor.

It carries out the reaction an aromatic L-alpha-amino acid + 2-oxoglutarate = an aromatic oxo-acid + L-glutamate. Aminotransferase that catalyzes the conversion of aromatic amino acids and 2-oxoglutarate into corresponding aromatic oxo acids and L-glutamate. The sequence is that of Aromatic amino acid aminotransferase from Rhodococcus opacus (strain B4).